The chain runs to 253 residues: 5'/3'-nucleotidase SurE (253 aa).

Residues Asp8, Asp9, Ser39, and Asn92 each coordinate a divalent metal cation.

It belongs to the SurE nucleotidase family. A divalent metal cation is required as a cofactor.

Its subcellular location is the cytoplasm. It carries out the reaction a ribonucleoside 5'-phosphate + H2O = a ribonucleoside + phosphate. The enzyme catalyses a ribonucleoside 3'-phosphate + H2O = a ribonucleoside + phosphate. The catalysed reaction is [phosphate](n) + H2O = [phosphate](n-1) + phosphate + H(+). Its function is as follows. Nucleotidase with a broad substrate specificity as it can dephosphorylate various ribo- and deoxyribonucleoside 5'-monophosphates and ribonucleoside 3'-monophosphates with highest affinity to 3'-AMP. Also hydrolyzes polyphosphate (exopolyphosphatase activity) with the preference for short-chain-length substrates (P20-25). Might be involved in the regulation of dNTP and NTP pools, and in the turnover of 3'-mononucleotides produced by numerous intracellular RNases (T1, T2, and F) during the degradation of various RNAs. The polypeptide is 5'/3'-nucleotidase SurE (Serratia proteamaculans (strain 568)).